Reading from the N-terminus, the 496-residue chain is NADH-quinone oxidoreductase subunit N (496 aa).

13 helical membrane passes run 16-36 (SLSP…VGAI), 46-66 (CVFC…FNGL), 79-99 (ISII…PLAL), 116-136 (FLFM…LIIF), 166-186 (FAMG…FYLA), 208-228 (LIIL…LSLI), 245-267 (LAGY…IFAM), 278-298 (DMLY…ALVQ), 304-324 (MLAF…VANS), 331-351 (LFFY…MLWV), 382-402 (AVIM…SVFW), 422-442 (IIMI…VFMF), and 464-484 (VIVG…GAIL).

Belongs to the complex I subunit 2 family. In terms of assembly, NDH-1 is composed of 14 different subunits. Subunits NuoA, H, J, K, L, M, N constitute the membrane sector of the complex.

It localises to the cell inner membrane. The catalysed reaction is a quinone + NADH + 5 H(+)(in) = a quinol + NAD(+) + 4 H(+)(out). In terms of biological role, NDH-1 shuttles electrons from NADH, via FMN and iron-sulfur (Fe-S) centers, to quinones in the respiratory chain. The immediate electron acceptor for the enzyme in this species is believed to be ubiquinone. Couples the redox reaction to proton translocation (for every two electrons transferred, four hydrogen ions are translocated across the cytoplasmic membrane), and thus conserves the redox energy in a proton gradient. The protein is NADH-quinone oxidoreductase subunit N of Campylobacter concisus (strain 13826).